We begin with the raw amino-acid sequence, 519 residues long: uncharacterized protein (519 aa).

13 helical membrane passes run 19–39 (FSSS…AIAT), 42–62 (VLVS…DWQI), 87–107 (MNIV…TVSG), 128–148 (LLAA…SLAV), 179–199 (VMMP…GLLA), 220–240 (FYAI…FDIA), 270–290 (LILP…YTGA), 311–331 (VGTS…LLII), 345–365 (WIVG…AWTI), 386–406 (IPMQ…AFST), 413–433 (FGIM…ELLL), 475–495 (LPYA…VGFT), and 496–516 (YSGL…IFAV).

The protein resides in the cell membrane. This is an uncharacterized protein from Haemophilus influenzae (strain ATCC 51907 / DSM 11121 / KW20 / Rd).